We begin with the raw amino-acid sequence, 430 residues long: Sulfide-quinone reductase (430 aa).

FAD-binding positions include 9-13 (GGGVG), 34-36 (SDR), 42-43 (TP), and Thr-105. Cys-156 functions as the Cysteine persulfide intermediate in the catalytic mechanism. 2 cysteine pairs are disulfide-bonded: Cys-280-Cys-422 and Cys-419-Cys-430. The FAD site is built by Val-294 and Gly-314. An a quinone-binding site is contributed by Ile-346. The active-site Cysteine persulfide intermediate is Cys-347. Lys-382 contributes to the FAD binding site.

Belongs to the SQRD family. Homotrimer. FAD serves as cofactor.

It is found in the membrane. The enzyme catalyses n a quinone + n hydrogen sulfide + n H(+) = polysulfur(n-2) + n a quinol. Functionally, catalyzes the oxidation of hydrogen sulfide, with the help of a quinone. Consecutive reaction cycles lead to the accumulation of a polysulfide product on the active site Cys residues; these products are released when they exceed a critical length, typically as cyclooctasulfur. This Aquifex aeolicus (strain VF5) protein is Sulfide-quinone reductase.